The primary structure comprises 237 residues: Ribosomal RNA small subunit methyltransferase G (237 aa).

Residues Gly76, Phe81, 128 to 129, and Arg147 each bind S-adenosyl-L-methionine; that span reads VE.

The protein belongs to the methyltransferase superfamily. RNA methyltransferase RsmG family.

The protein resides in the cytoplasm. Its function is as follows. Specifically methylates the N7 position of a guanine in 16S rRNA. This chain is Ribosomal RNA small subunit methyltransferase G, found in Prochlorococcus marinus (strain MIT 9215).